Here is a 503-residue protein sequence, read N- to C-terminus: Maturase K (503 aa).

This sequence belongs to the intron maturase 2 family. MatK subfamily.

Its subcellular location is the plastid. The protein resides in the chloroplast. In terms of biological role, usually encoded in the trnK tRNA gene intron. Probably assists in splicing its own and other chloroplast group II introns. The protein is Maturase K of Eucalyptus globulus subsp. globulus (Tasmanian blue gum).